The following is a 402-amino-acid chain: Arginine biosynthesis bifunctional protein ArgJ (402 aa).

Residues threonine 152, lysine 178, threonine 189, glutamate 275, asparagine 397, and threonine 402 each coordinate substrate. The active-site Nucleophile is the threonine 189.

Belongs to the ArgJ family. In terms of assembly, heterotetramer of two alpha and two beta chains.

The protein resides in the cytoplasm. The catalysed reaction is N(2)-acetyl-L-ornithine + L-glutamate = N-acetyl-L-glutamate + L-ornithine. The enzyme catalyses L-glutamate + acetyl-CoA = N-acetyl-L-glutamate + CoA + H(+). The protein operates within amino-acid biosynthesis; L-arginine biosynthesis; L-ornithine and N-acetyl-L-glutamate from L-glutamate and N(2)-acetyl-L-ornithine (cyclic): step 1/1. It functions in the pathway amino-acid biosynthesis; L-arginine biosynthesis; N(2)-acetyl-L-ornithine from L-glutamate: step 1/4. In terms of biological role, catalyzes two activities which are involved in the cyclic version of arginine biosynthesis: the synthesis of N-acetylglutamate from glutamate and acetyl-CoA as the acetyl donor, and of ornithine by transacetylation between N(2)-acetylornithine and glutamate. In Symbiobacterium thermophilum (strain DSM 24528 / JCM 14929 / IAM 14863 / T), this protein is Arginine biosynthesis bifunctional protein ArgJ.